The following is a 373-amino-acid chain: Plasmepsin VIII (373 aa).

The first 21 residues, Met1–Ser21, serve as a signal peptide directing secretion. A Peptidase A1 domain is found at Phe50–Ala370. Residues Asp68 and Asp258 contribute to the active site.

The protein belongs to the peptidase A1 family.

Functionally, during the development in the mosquito vector, plays an essential role in sporozoite egress from the oocyst and sporozoite gliding motility, which is required for the invasion of salivary glands and subsequent transmission to the host. In Plasmodium berghei (strain Anka), this protein is Plasmepsin VIII.